The chain runs to 92 residues: Transcription factor S4 (92 aa).

Positions 1–31 are ZR-N; the sequence is MRFCPKCGSFLKVKGNKMVCSKCGYSDHDVE. Zn(2+) is bound by residues cysteine 4, cysteine 7, cysteine 20, and cysteine 23. Residues 32–56 are flexible linker; that stretch reads KVILKENVAHENDKTIIADGETIEG. A ZR-C region spans residues 55 to 92; the sequence is EGRVAISLCPRCGSVRAILLNKKKRLYRCMTCNFVYNI. Residues cysteine 63 and cysteine 66 each coordinate Zn(2+). Active-site residues include lysine 76, lysine 77, and lysine 78. Zn(2+) is bound by residues cysteine 83 and cysteine 86.

The protein belongs to the archaeal RpoM/eukaryotic RPA12/RPB9/RPC11 RNA polymerase family. As to quaternary structure, interacts with RNA polymerase. Zn(2+) is required as a cofactor.

Its function is as follows. A potent inhibitor of RNA polymerase (RNAP) probably involved in viral defense. Destabilizes the transcription pre-initiation complex of TBP, TFB, DNA and RNAP, inhibits abortive transcription initiation, productive initiation and transcription elongation. Increases the RNAP KM for NTPs about 50-fold. Overexpression of TFS1-tip4 (TFS1 with the active tip of this protein, phenocopies this protein) in S.acidocaldarius MW001 leads to severe growth inhibition. When bound to RNAP induces conformational changes that widen the DNA-binding channel, probably destabilizing the interaction of DNA with RNAP. This is Transcription factor S4 from Saccharolobus solfataricus (strain ATCC 35092 / DSM 1617 / JCM 11322 / P2) (Sulfolobus solfataricus).